The chain runs to 188 residues: MLKKSLSTAVVLVTLLLSFTLTACGGVGIASLQRYSDTKDGYEFLYPNGWIGVDVKGASPGVDVVFRDLIERDENLSVIISEIPSDKTLTDLGTATDVGYRFMKTVNDASQGDRQAELINAEARDEDGQVYYTLEYRVLVGDNVERHDLASVTTNRGKLITFDLSTAEDRWDTVKSLFDTVASSFHVY.

An N-terminal signal peptide occupies residues Met1–Ala23. Cys24 is lipidated: N-palmitoyl cysteine. Cys24 carries the S-diacylglycerol cysteine lipid modification.

This sequence belongs to the PsbP family. CyanoP subfamily. Monomer. Present in about 3% of photosystem II (PSII) preparations. Purifies with partially assembled PSII complexes, in addition to a small amount of monomeric and dimeric PSII, and trimeric PSI.

It localises to the cellular thylakoid membrane. Functionally, plays a role in the early stages of photosystem II (PSII) assembly; binds to D2 (psbD) and may facilitate its incorporation into PSII. Required for optimal photoautotrophic growth in the absence of Ca(2+) or Cl(-), functions in optimizing PSII water oxidation/O(2) evolving activity. Might be involved in assembly of the oxygen evolving complex. This Synechocystis sp. (strain ATCC 27184 / PCC 6803 / Kazusa) protein is CyanoP.